The primary structure comprises 487 residues: Glutamate--tRNA ligase (487 aa).

A 'HIGH' region motif is present at residues 10 to 20 (PSPTGYMHVGN). Residues 251–255 (KLSKR) carry the 'KMSKS' region motif. K254 is an ATP binding site.

The protein belongs to the class-I aminoacyl-tRNA synthetase family. Glutamate--tRNA ligase type 1 subfamily. Monomer.

It localises to the cytoplasm. The catalysed reaction is tRNA(Glu) + L-glutamate + ATP = L-glutamyl-tRNA(Glu) + AMP + diphosphate. Functionally, catalyzes the attachment of glutamate to tRNA(Glu) in a two-step reaction: glutamate is first activated by ATP to form Glu-AMP and then transferred to the acceptor end of tRNA(Glu). This is Glutamate--tRNA ligase from Clostridium kluyveri (strain ATCC 8527 / DSM 555 / NBRC 12016 / NCIMB 10680 / K1).